The following is a 239-amino-acid chain: DNA repair protein RecO (239 aa).

The protein belongs to the RecO family.

In terms of biological role, involved in DNA repair and RecF pathway recombination. This chain is DNA repair protein RecO, found in Bifidobacterium longum (strain DJO10A).